A 465-amino-acid chain; its full sequence is Asparagine--tRNA ligase (465 aa).

Belongs to the class-II aminoacyl-tRNA synthetase family. As to quaternary structure, homodimer.

It is found in the cytoplasm. It carries out the reaction tRNA(Asn) + L-asparagine + ATP = L-asparaginyl-tRNA(Asn) + AMP + diphosphate + H(+). This Pseudoalteromonas translucida (strain TAC 125) protein is Asparagine--tRNA ligase.